The primary structure comprises 119 residues: Large ribosomal subunit protein bL20 (119 aa).

This sequence belongs to the bacterial ribosomal protein bL20 family.

Its function is as follows. Binds directly to 23S ribosomal RNA and is necessary for the in vitro assembly process of the 50S ribosomal subunit. It is not involved in the protein synthesizing functions of that subunit. This is Large ribosomal subunit protein bL20 from Neisseria gonorrhoeae (strain ATCC 700825 / FA 1090).